The chain runs to 553 residues: Keratin, type II cytoskeletal 6A (553 aa).

Over residues 1–20 (MSTKTTIKSQTSHRGYSASS) the composition is skewed to polar residues. A disordered region spans residues 1–21 (MSTKTTIKSQTSHRGYSASSA). A head region spans residues 1-151 (MSTKTTIKSQ…DPTIQRVRTE (151 aa)). Residues 152-187 (EREQIKTLNNKFASFIDKVRFLEQQNKVLDTKWALL) form a coil 1A region. In terms of domain architecture, IF rod spans 152 to 465 (EREQIKTLNN…KLLEGEECRL (314 aa)). The linker 1 stretch occupies residues 188-206 (QEQGTKTVRQNLEPMFEQY). A coil 1B region spans residues 207–298 (ISNLRRQLDS…ALYEAELSQM (92 aa)). The segment at 299–322 (QTHISDTSVVLSMDNNRSLDLDSI) is linker 12. A coil 2 region spans residues 323–461 (IAEVKAQYED…ATYRKLLEGE (139 aa)). Positions 462–553 (ECRLNGEGVG…TSSSKKSYRQ (92 aa)) are tail. Residues 528–553 (LSSSGGLSSSTIKYTTTSSSKKSYRQ) are disordered. The segment covering 531 to 553 (SGGLSSSTIKYTTTSSSKKSYRQ) has biased composition (low complexity).

Belongs to the intermediate filament family. Heterodimer of a type I and a type II keratin. KRT6 isomers associate with KRT16 and/or KRT17. Interacts with TCHP. In terms of tissue distribution, predominates in the adult trunk skin, tongue, trachea/esophagus and eye. In adult skin, localization is restricted to hair follicles, where it is localized predominantly in the outer root sheath.

Its function is as follows. Epidermis-specific type I keratin involved in wound healing. Involved in the activation of follicular keratinocytes after wounding, while it does not play a major role in keratinocyte proliferation or migration. Participates in the regulation of epithelial migration by inhibiting the activity of SRC during wound repair. This chain is Keratin, type II cytoskeletal 6A (Krt6a), found in Mus musculus (Mouse).